The sequence spans 239 residues: 1-(5-phosphoribosyl)-5-[(5-phosphoribosylamino)methylideneamino] imidazole-4-carboxamide isomerase (239 aa).

The active-site Proton acceptor is the Asp-8. Residue Asp-129 is the Proton donor of the active site.

This sequence belongs to the HisA/HisF family.

The protein resides in the cytoplasm. The catalysed reaction is 1-(5-phospho-beta-D-ribosyl)-5-[(5-phospho-beta-D-ribosylamino)methylideneamino]imidazole-4-carboxamide = 5-[(5-phospho-1-deoxy-D-ribulos-1-ylimino)methylamino]-1-(5-phospho-beta-D-ribosyl)imidazole-4-carboxamide. It participates in amino-acid biosynthesis; L-histidine biosynthesis; L-histidine from 5-phospho-alpha-D-ribose 1-diphosphate: step 4/9. In Paramagnetospirillum magneticum (strain ATCC 700264 / AMB-1) (Magnetospirillum magneticum), this protein is 1-(5-phosphoribosyl)-5-[(5-phosphoribosylamino)methylideneamino] imidazole-4-carboxamide isomerase.